An 851-amino-acid chain; its full sequence is DNA mismatch repair protein MutS (851 aa).

Residue 602–609 (GPNMSGKS) participates in ATP binding.

This sequence belongs to the DNA mismatch repair MutS family.

Functionally, this protein is involved in the repair of mismatches in DNA. It is possible that it carries out the mismatch recognition step. This protein has a weak ATPase activity. The chain is DNA mismatch repair protein MutS from Streptococcus pyogenes serotype M12 (strain MGAS2096).